A 300-amino-acid chain; its full sequence is Probable ABC transporter permease protein YurM (300 aa).

6 helical membrane-spanning segments follow: residues 37 to 57 (VWVF…WMVM), 98 to 118 (VIVT…AAYG), 129 to 149 (FFLV…LVPL), 161 to 181 (TYWA…IILI), 204 to 224 (FGVF…TSGI), and 264 to 284 (WGVL…LFLL). An ABC transmembrane type-1 domain is found at 94–285 (FMNSVIVTAL…APIIILFLLM (192 aa)).

Belongs to the binding-protein-dependent transport system permease family. MalFG subfamily.

Its subcellular location is the cell membrane. In terms of biological role, probably part of the binding-protein-dependent transport system YurMNO. Probably responsible for the translocation of the substrate across the membrane. The protein is Probable ABC transporter permease protein YurM (yurM) of Bacillus subtilis (strain 168).